The primary structure comprises 229 residues: Potassium/proton antiporter CemA (229 aa).

3 consecutive transmembrane segments (helical) span residues 6–26 (AFIPFFYFTSIVFLPWVISLC), 107–127 (ILHFSTNLISFVILSGYSFWG), and 189–209 (ILSGLVSTFPVILDTIFKYWI).

The protein belongs to the CemA family.

The protein localises to the plastid. It is found in the chloroplast inner membrane. It catalyses the reaction K(+)(in) + H(+)(out) = K(+)(out) + H(+)(in). In terms of biological role, contributes to K(+)/H(+) antiport activity by supporting proton efflux to control proton extrusion and homeostasis in chloroplasts in a light-dependent manner to modulate photosynthesis. Prevents excessive induction of non-photochemical quenching (NPQ) under continuous-light conditions. Indirectly promotes efficient inorganic carbon uptake into chloroplasts. The polypeptide is Potassium/proton antiporter CemA (Draba nemorosa (Woodland whitlowgrass)).